The chain runs to 403 residues: Argininosuccinate synthase (403 aa).

Position 10–18 (10–18 (AYSGGVDTS)) interacts with ATP. Residue Y89 coordinates L-citrulline. G119 lines the ATP pocket. Residues T121, N125, and D126 each coordinate L-aspartate. N125 serves as a coordination point for L-citrulline. 5 residues coordinate L-citrulline: R129, S177, S186, E262, and Y274.

It belongs to the argininosuccinate synthase family. Type 1 subfamily. Homotetramer.

The protein resides in the cytoplasm. The enzyme catalyses L-citrulline + L-aspartate + ATP = 2-(N(omega)-L-arginino)succinate + AMP + diphosphate + H(+). It functions in the pathway amino-acid biosynthesis; L-arginine biosynthesis; L-arginine from L-ornithine and carbamoyl phosphate: step 2/3. In Synechococcus sp. (strain JA-3-3Ab) (Cyanobacteria bacterium Yellowstone A-Prime), this protein is Argininosuccinate synthase.